Here is a 223-residue protein sequence, read N- to C-terminus: UPF0758 protein FMG_0357 (223 aa).

An MPN domain is found at 101-223; the sequence is SLNDPDSVAE…SLSMRKGMYF (123 aa). Zn(2+) is bound by residues histidine 172, histidine 174, and aspartate 185. Positions 172 to 185 match the JAMM motif motif; it reads HNHPSGSLIPSNAD.

This sequence belongs to the UPF0758 family.

The protein is UPF0758 protein FMG_0357 of Finegoldia magna (strain ATCC 29328 / DSM 20472 / WAL 2508) (Peptostreptococcus magnus).